A 137-amino-acid chain; its full sequence is Large ribosomal subunit protein mL61 (137 aa).

Belongs to the mitochondrion-specific ribosomal protein mL61 family. Component of the mitochondrial large ribosomal subunit (mt-LSU). Mature yeast 74S mitochondrial ribosomes consist of a small (37S) and a large (54S) subunit. The 37S small subunit contains a 15S ribosomal RNA (15S mt-rRNA) and 34 different proteins. The 54S large subunit contains a 21S rRNA (21S mt-rRNA) and 46 different proteins.

The protein localises to the mitochondrion. Its function is as follows. Component of the mitochondrial ribosome (mitoribosome), a dedicated translation machinery responsible for the synthesis of mitochondrial genome-encoded proteins, including at least some of the essential transmembrane subunits of the mitochondrial respiratory chain. The mitoribosomes are attached to the mitochondrial inner membrane and translation products are cotranslationally integrated into the membrane. mL61 is not essential in cells grown at 30 degrees Celsius but is required for mitochondrial translation in cells grown at 18 degrees Celsius. The polypeptide is Large ribosomal subunit protein mL61 (MRP49) (Saccharomyces cerevisiae (strain ATCC 204508 / S288c) (Baker's yeast)).